The chain runs to 321 residues: Beta-ketoacyl-[acyl-carrier-protein] synthase III (321 aa).

Catalysis depends on residues Cys113 and His246. Residues 247–251 (QANVR) form an ACP-binding region. Asn276 is a catalytic residue.

It belongs to the thiolase-like superfamily. FabH family. Homodimer.

It is found in the cytoplasm. It catalyses the reaction malonyl-[ACP] + acetyl-CoA + H(+) = 3-oxobutanoyl-[ACP] + CO2 + CoA. It participates in lipid metabolism; fatty acid biosynthesis. Functionally, catalyzes the condensation reaction of fatty acid synthesis by the addition to an acyl acceptor of two carbons from malonyl-ACP. Catalyzes the first condensation reaction which initiates fatty acid synthesis and may therefore play a role in governing the total rate of fatty acid production. Possesses both acetoacetyl-ACP synthase and acetyl transacylase activities. Its substrate specificity determines the biosynthesis of branched-chain and/or straight-chain of fatty acids. This Enterococcus faecalis (strain ATCC 700802 / V583) protein is Beta-ketoacyl-[acyl-carrier-protein] synthase III.